The following is a 503-amino-acid chain: Glutamate/gamma-aminobutyrate antiporter (503 aa).

33–43 (LHLVFFLLLGG) serves as a coordination point for L-glutamate. 7 helical membrane passes run 35 to 55 (LVFFLLLGGLLWFLPVALCAA), 153 to 173 (FVVGIVIPSIILFGLAAAYFI), 194 to 214 (VSTLVVFVSFILAYMGVEASA), 232 to 252 (ILLVILAISLDAIGGFSVAAV), 366 to 386 (LTVVIYLVGYLLFFIGYFVLI), 407 to 427 (IIAGIGFLLSIFALFISFVPP), and 440 to 460 (MILLISFVVTAILPFIVYELH).

It belongs to the amino acid-polyamine-organocation (APC) superfamily. Glutamate:GABA antiporter (GGA) (TC 2.A.3.7) family.

The protein localises to the cell membrane. It catalyses the reaction 4-aminobutanoate(in) + L-glutamate(out) = 4-aminobutanoate(out) + L-glutamate(in). In terms of biological role, involved in glutaminase-dependent acid resistance. Exchanges extracellular glutamate (Glu) for intracellular gamma-aminobutyric acid (GABA) under acidic conditions. The sequence is that of Glutamate/gamma-aminobutyrate antiporter (gadC) from Lactococcus lactis subsp. lactis (strain IL1403) (Streptococcus lactis).